A 505-amino-acid polypeptide reads, in one-letter code: Lysine--tRNA ligase (505 aa).

Over residues Met1–Leu11 the composition is skewed to polar residues. Residues Met1–Leu23 form a disordered region. A compositionally biased stretch (basic and acidic residues) spans Ser12–Leu23. Positions 415 and 422 each coordinate Mg(2+).

The protein belongs to the class-II aminoacyl-tRNA synthetase family. As to quaternary structure, homodimer. Requires Mg(2+) as cofactor.

It localises to the cytoplasm. It catalyses the reaction tRNA(Lys) + L-lysine + ATP = L-lysyl-tRNA(Lys) + AMP + diphosphate. The sequence is that of Lysine--tRNA ligase from Ectopseudomonas mendocina (strain ymp) (Pseudomonas mendocina).